Here is a 246-residue protein sequence, read N- to C-terminus: Phosphonates import ATP-binding protein PhnC (246 aa).

The 245-residue stretch at Ile-2–Ala-246 folds into the ABC transporter domain. Gly-35–Ser-42 lines the ATP pocket.

It belongs to the ABC transporter superfamily. Phosphonates importer (TC 3.A.1.9.1) family. As to quaternary structure, the complex is composed of two ATP-binding proteins (PhnC), two transmembrane proteins (PhnE) and a solute-binding protein (PhnD).

The protein resides in the cell membrane. It carries out the reaction phosphonate(out) + ATP + H2O = phosphonate(in) + ADP + phosphate + H(+). Its function is as follows. Part of the ABC transporter complex PhnCDE involved in phosphonates import. Responsible for energy coupling to the transport system. The sequence is that of Phosphonates import ATP-binding protein PhnC from Lactococcus lactis subsp. lactis (strain IL1403) (Streptococcus lactis).